A 256-amino-acid chain; its full sequence is Indole-3-glycerol phosphate synthase (256 aa).

It belongs to the TrpC family.

It catalyses the reaction 1-(2-carboxyphenylamino)-1-deoxy-D-ribulose 5-phosphate + H(+) = (1S,2R)-1-C-(indol-3-yl)glycerol 3-phosphate + CO2 + H2O. It participates in amino-acid biosynthesis; L-tryptophan biosynthesis; L-tryptophan from chorismate: step 4/5. This is Indole-3-glycerol phosphate synthase from Chlorobaculum tepidum (strain ATCC 49652 / DSM 12025 / NBRC 103806 / TLS) (Chlorobium tepidum).